A 73-amino-acid polypeptide reads, in one-letter code: Waprin-Phi2 (73 aa).

Residues 1–21 form the signal peptide; it reads MKATLLLLLLFAVILPGTISA. The WAP domain maps to 22–72; that stretch reads EQEKPGSCPNVDMPIPPLGLCKTTCSKDSDCSETKKCCKNGCGFMTCTTAR. Cystine bridges form between Cys29/Cys59, Cys42/Cys63, Cys46/Cys58, and Cys52/Cys68.

Belongs to the venom waprin family. In terms of tissue distribution, expressed by the venom gland.

It localises to the secreted. Damages membranes of susceptible bacteria. Has no hemolytic activity. Not toxic to mice. Does not inhibit the proteinases elastase and cathepsin G. The protein is Waprin-Phi2 of Philodryas olfersii (Green snake).